Reading from the N-terminus, the 162-residue chain is Interleukin-15 (162 aa).

The first 29 residues, 1–29, serve as a signal peptide directing secretion; that stretch reads MRISKPHLRITSIQCYVCLLLNTHFLTEA. Positions 30–48 are excised as a propeptide; the sequence is GIRVFILGCISAGIPKTEA. 2 cysteine pairs are disulfide-bonded: cysteine 83–cysteine 133 and cysteine 90–cysteine 136. Asparagine 119, asparagine 127, and asparagine 143 each carry an N-linked (GlcNAc...) asparagine glycan.

The protein belongs to the IL-15/IL-21 family.

It localises to the secreted. Cytokine that plays a major role in the development of inflammatory and protective immune responses to microbial invaders and parasites by modulating immune cells of both the innate and adaptive immune systems. Stimulates the proliferation of natural killer cells, T-cells and B-cells and promotes the secretion of several cytokines. In monocytes, induces the production of IL8 and monocyte chemotactic protein 1/CCL2, two chemokines that attract neutrophils and monocytes respectively to sites of infection. Unlike most cytokines, which are secreted in soluble form, IL15 is expressed in association with its high affinity IL15RA on the surface of IL15-producing cells and delivers signals to target cells that express IL2RB and IL2RG receptor subunits. Binding to its receptor triggers the phosphorylation of JAK1 and JAK3 and the recruitment and subsequent phosphorylation of signal transducer and activator of transcription-3/STAT3 and STAT5. In mast cells, induces the rapid tyrosine phosphorylation of STAT6 and thereby controls mast cell survival and release of cytokines such as IL4. The polypeptide is Interleukin-15 (IL15) (Marmota himalayana (Himalayan marmot)).